Reading from the N-terminus, the 79-residue chain is U-actitoxin-Avd8a (79 aa).

An N-terminal signal peptide occupies residues 1–19; sequence MKSLVIVFVVLLGVAMISA. Positions 20–36 are excised as a propeptide; sequence NEEELLAILQDQRNDAR.

This sequence belongs to the sea anemone 8 toxin family.

It localises to the secreted. The protein localises to the nematocyst. This is U-actitoxin-Avd8a from Anemonia viridis (Snakelocks anemone).